Consider the following 397-residue polypeptide: Lysophospholipid transporter LplT (397 aa).

Topologically, residues Met1–Lys17 are periplasmic. The helical transmembrane segment at Ala18–Leu38 threads the bilayer. Topologically, residues Ala39–Pro52 are cytoplasmic. The chain crosses the membrane as a helical span at residues Ile53–Ala73. Residues Asp74 to Leu90 lie on the Periplasmic side of the membrane. A helical membrane pass occupies residues Leu91–Val111. Topologically, residues Gly112–Thr144 are cytoplasmic. Residues Ile145 to Val165 traverse the membrane as a helical segment. Ala166 is a topological domain (periplasmic). A helical transmembrane segment spans residues Leu167–Leu187. Residues Ala188–Ser226 are Cytoplasmic-facing. A helical membrane pass occupies residues Leu227–Leu247. The Periplasmic segment spans residues Gly248–Thr256. The chain crosses the membrane as a helical span at residues Tyr257–Val277. The Cytoplasmic portion of the chain corresponds to Thr278–Glu280. A helical membrane pass occupies residues Thr281–Leu301. At Gln302 to Glu304 the chain is on the periplasmic side. Residues Leu305–Pro325 traverse the membrane as a helical segment. Residues Leu326–Ala343 lie on the Cytoplasmic side of the membrane. The helical transmembrane segment at Ile344–Leu364 threads the bilayer. Residues Ala365–Val366 are Periplasmic-facing. Residues Met367–Ile387 traverse the membrane as a helical segment. Residues Thr388–His397 lie on the Cytoplasmic side of the membrane.

This sequence belongs to the major facilitator superfamily. LplT (TC 2.A.1.42) family.

Its subcellular location is the cell inner membrane. In terms of biological role, catalyzes the facilitated diffusion of 2-acyl-glycero-3-phosphoethanolamine (2-acyl-GPE) into the cell. This chain is Lysophospholipid transporter LplT, found in Escherichia coli O7:K1 (strain IAI39 / ExPEC).